A 320-amino-acid chain; its full sequence is Malate dehydrogenase (320 aa).

NAD(+) contacts are provided by residues 10 to 15 and Asp-34; that span reads GSGMIG. Arg-83 and Arg-89 together coordinate substrate. NAD(+) is bound by residues Asn-96 and 119–121; that span reads ITN. Substrate-binding residues include Asn-121 and Arg-152. The Proton acceptor role is filled by His-176.

It belongs to the LDH/MDH superfamily. MDH type 3 family.

It catalyses the reaction (S)-malate + NAD(+) = oxaloacetate + NADH + H(+). Its function is as follows. Catalyzes the reversible oxidation of malate to oxaloacetate. This Agrobacterium fabrum (strain C58 / ATCC 33970) (Agrobacterium tumefaciens (strain C58)) protein is Malate dehydrogenase.